We begin with the raw amino-acid sequence, 339 residues long: DNA-directed RNA polymerase subunit alpha (339 aa).

The alpha N-terminal domain (alpha-NTD) stretch occupies residues methionine 1–glutamate 235. Positions phenylalanine 251–tyrosine 339 are alpha C-terminal domain (alpha-CTD).

The protein belongs to the RNA polymerase alpha chain family. Homodimer. The RNAP catalytic core consists of 2 alpha, 1 beta, 1 beta' and 1 omega subunit. When a sigma factor is associated with the core the holoenzyme is formed, which can initiate transcription.

The enzyme catalyses RNA(n) + a ribonucleoside 5'-triphosphate = RNA(n+1) + diphosphate. In terms of biological role, DNA-dependent RNA polymerase catalyzes the transcription of DNA into RNA using the four ribonucleoside triphosphates as substrates. The protein is DNA-directed RNA polymerase subunit alpha of Rhodopseudomonas palustris (strain HaA2).